The following is a 183-amino-acid chain: Glutathione-regulated potassium-efflux system ancillary protein KefG (183 aa).

The protein belongs to the NAD(P)H dehydrogenase (quinone) family. KefG subfamily. In terms of assembly, interacts with KefB.

It localises to the cell inner membrane. The catalysed reaction is a quinone + NADH + H(+) = a quinol + NAD(+). It carries out the reaction a quinone + NADPH + H(+) = a quinol + NADP(+). Functionally, regulatory subunit of a potassium efflux system that confers protection against electrophiles. Required for full activity of KefB. This chain is Glutathione-regulated potassium-efflux system ancillary protein KefG, found in Salmonella paratyphi C (strain RKS4594).